The following is a 642-amino-acid chain: Aryl hydrocarbon receptor nuclear translocator homolog (642 aa).

The bHLH domain occupies 13-66; sequence ASRENHCEIERRRRNKMTAYITELSDMVPTCSALARKPDKLTILRMAVAHMKAL. PAS domains follow at residues 85-156 and 271-341; these read DQEL…ESQN and TAAN…LKQK. The PAC domain occupies 346–389; that stretch reads SLLYRARAKNSEYVWLRTQAYAFLNPYTDEVEYIVCTNSSGKTM. Residues 450-612 form a disordered region; it reads QAPTPQQQQQ…GPAGAGQPQG (163 aa). Polar residues-rich tracts occupy residues 463 to 482 and 528 to 554; these read RPGSAQTTPVGYTYDTTHSP and YQYQQTSPARSPSGPTYTQLSAGNGNR. Residues 555–564 are compositionally biased toward low complexity; sequence QQAQPGAYQA.

In terms of assembly, efficient DNA binding requires dimerization with another bHLH protein. Heterodimer with ahr, trh or sim. In terms of tissue distribution, at stage 11, expression is detected in tracheal pits. At later stages, strong expression is also detected in the CNS.

The protein resides in the nucleus. Heterodimers of tgo/trh are involved in the control of breathless expression. Plays a role in the cellular or tissue response to oxygen deprivation. This Drosophila melanogaster (Fruit fly) protein is Aryl hydrocarbon receptor nuclear translocator homolog (tgo).